The sequence spans 794 residues: Protein sel-1 homolog 1 (794 aa).

An N-terminal signal peptide occupies residues 1–21 (MRVRIGLTLLLCAVLLSLASA). Residues 21–50 (ASSDEEGSQDESLDSKTTLTSDESVKDHTT) form a disordered region. An interaction with ERLEC1, OS9 and SYVN1 region spans residues 22–737 (SSDEEGSQDE…DMFTQLDMDQ (716 aa)). The Lumenal portion of the chain corresponds to 22–738 (SSDEEGSQDE…MFTQLDMDQL (717 aa)). Residues 23-32 (SDEEGSQDES) are compositionally biased toward acidic residues. The residue at position 63 (serine 63) is a Phosphoserine. The segment covering 64-77 (EESELESSIQEEED) has biased composition (acidic residues). Residues 64–109 (EESELESSIQEEEDSLKSQEGESVTEDISFLESPNPENKDYEEPKK) are disordered. The Fibronectin type-II domain maps to 122-170 (AHGEPCHFPFLFLDKEYDECTSDGREDGRLWCATTYDYKADEKWGFCET). Cystine bridges form between cysteine 127/cysteine 153 and cysteine 141/cysteine 168. 9 Sel1-like repeats span residues 183 to 218 (AEMM…SMNH), 219 to 254 (TKAL…EEGS), 255 to 290 (PKGQ…LGGN), 291 to 326 (LIAH…NHVA), 373 to 409 (VQAQ…NAGN), 410 to 446 (SHAM…DMGN), 447 to 482 (PVGQ…EQGW), 483 to 518 (VDGQ…QGGH), and 519 to 554 (ILAF…ERGR). Asparagine 195 and asparagine 217 each carry an N-linked (GlcNAc...) asparagine glycan. A glycan (N-linked (GlcNAc...) asparagine) is linked at asparagine 272. The tract at residues 352–537 (NSGMLEEDLI…MHASGTGVMR (186 aa)) is important for homodimerization and oligomerization. N-linked (GlcNAc...) asparagine glycosylation occurs at asparagine 431. Asparagine 608 carries N-linked (GlcNAc...) asparagine glycosylation. 2 Sel1-like repeats span residues 627 to 662 (TVAR…EQQH) and 664 to 699 (AQAM…EASP). Residues 643–723 (TDVDYETAFI…VVYFLQYIRE (81 aa)) form an interaction with SYVN1 region. The tract at residues 738 to 794 (LLGPEWDLYLMTIIALLLGTVIAYRQRQHQDMPAPRPPGPRPAPPQQEGPPEQQPPQ) is mediates retention in the endoplasmic reticulum. Residues 739–759 (LGPEWDLYLMTIIALLLGTVI) form a helical membrane-spanning segment. Residues 760–794 (AYRQRQHQDMPAPRPPGPRPAPPQQEGPPEQQPPQ) lie on the Cytoplasmic side of the membrane. The interval 766–794 (HQDMPAPRPPGPRPAPPQQEGPPEQQPPQ) is disordered. Over residues 771–794 (APRPPGPRPAPPQQEGPPEQQPPQ) the composition is skewed to pro residues.

Belongs to the sel-1 family. As to quaternary structure, homodimer and homooligomer. May form a complex with ERLEC1, HSPA5, OS9, and SYVN1. Interacts with FOXRED2 and EDEM1. Interacts with LPL. Interacts with LMF1; may stabilize the complex formed by LPL and LMF1 and thereby promote the export of LPL dimers. Component of the HRD1 complex, which comprises at least SYNV1/HRD1, DERL1/2, FAM8A1, HERPUD1/HERP, OS9, SEL1L and UBE2J1. SYNV1 assembles with SEL1L and FAM8A1 through its transmembrane domains, but interaction with its cytoplasmic domain is required to confer stability to FAM8A1 and enhance recruitment of HERPUD1. The interaction with SYNV1/HRD1 is direct. (Microbial infection) Interacts with human cytomegalovirus protein UL148. N-glycosylated. As to expression, highly expressed in pancreas.

The protein resides in the endoplasmic reticulum membrane. Its function is as follows. Plays a role in the endoplasmic reticulum quality control (ERQC) system also called ER-associated degradation (ERAD) involved in ubiquitin-dependent degradation of misfolded endoplasmic reticulum proteins. Enhances SYVN1 stability. Plays a role in LPL maturation and secretion. Required for normal differentiation of the pancreas epithelium, and for normal exocrine function and survival of pancreatic cells. May play a role in Notch signaling. The chain is Protein sel-1 homolog 1 from Homo sapiens (Human).